Reading from the N-terminus, the 348-residue chain is MKIIGIESSCDETGVAVYDTALSGSAALRAHSVYSQVALHAEYGGVVPELASRDHVRKLLPLLRQTLAEAKLSVEELDGVAYTAGPGLVGALLVGAGVARALAWALEVPAIGVHHMEGHLLSPLLEDDPPEVPFVALLVSGGHTQLVAVDAIGDYRLLGETLDDAAGEAFDKVAKLMGLPYPGGPQLAALAERGIPGRFCFTRPMVDRPGLDFSFSGLKTQVLLAWRNSDQSDAIRVDVARGFEDAVVDTLAIKCERALDTVACQTLVVAGGVGANKCLRARLQAMCRQRGGRACFPRPALCTDNGAMIAFAGALRLQAGQQSDVAVRVTPRWDMAALPPLVSRSCRR.

Positions 115 and 119 each coordinate Fe cation. Residues 138–142 (LVSGG), D171, G184, and N276 contribute to the substrate site. Residue D304 participates in Fe cation binding.

The protein belongs to the KAE1 / TsaD family. It depends on Fe(2+) as a cofactor.

Its subcellular location is the cytoplasm. The enzyme catalyses L-threonylcarbamoyladenylate + adenosine(37) in tRNA = N(6)-L-threonylcarbamoyladenosine(37) in tRNA + AMP + H(+). In terms of biological role, required for the formation of a threonylcarbamoyl group on adenosine at position 37 (t(6)A37) in tRNAs that read codons beginning with adenine. Is involved in the transfer of the threonylcarbamoyl moiety of threonylcarbamoyl-AMP (TC-AMP) to the N6 group of A37, together with TsaE and TsaB. TsaD likely plays a direct catalytic role in this reaction. The protein is tRNA N6-adenosine threonylcarbamoyltransferase of Xylella fastidiosa (strain M23).